Consider the following 71-residue polypeptide: ATP synthase F(0) complex subunit e, mitochondrial (71 aa).

The residue at position 34 (Lys34) is an N6-acetyllysine.

It belongs to the ATPase e subunit family. In terms of assembly, component of the ATP synthase complex composed at least of ATP5F1A/subunit alpha, ATP5F1B/subunit beta, ATP5MC1/subunit c (homooctomer), MT-ATP6/subunit a, MT-ATP8/subunit 8, ATP5ME/subunit e, ATP5MF/subunit f, ATP5MG/subunit g, ATP5MK/subunit k, ATP5MJ/subunit j, ATP5F1C/subunit gamma, ATP5F1D/subunit delta, ATP5F1E/subunit epsilon, ATP5PF/subunit F6, ATP5PB/subunit b, ATP5PD/subunit d, ATP5PO/subunit OSCP. ATP synthase complex consists of a soluble F(1) head domain (subunits alpha(3) and beta(3)) - the catalytic core - and a membrane F(0) domain - the membrane proton channel (subunits c, a, 8, e, f, g, k and j). These two domains are linked by a central stalk (subunits gamma, delta, and epsilon) rotating inside the F1 region and a stationary peripheral stalk (subunits F6, b, d, and OSCP).

It is found in the mitochondrion. It localises to the mitochondrion inner membrane. Functionally, subunit e, of the mitochondrial membrane ATP synthase complex (F(1)F(0) ATP synthase or Complex V) that produces ATP from ADP in the presence of a proton gradient across the membrane which is generated by electron transport complexes of the respiratory chain. ATP synthase complex consist of a soluble F(1) head domain - the catalytic core - and a membrane F(1) domain - the membrane proton channel. These two domains are linked by a central stalk rotating inside the F(1) region and a stationary peripheral stalk. During catalysis, ATP synthesis in the catalytic domain of F(1) is coupled via a rotary mechanism of the central stalk subunits to proton translocation. In vivo, can only synthesize ATP although its ATP hydrolase activity can be activated artificially in vitro. Part of the complex F(0) domain. This is ATP synthase F(0) complex subunit e, mitochondrial from Bos taurus (Bovine).